An 88-amino-acid chain; its full sequence is Small ribosomal subunit protein bS16c (88 aa).

This sequence belongs to the bacterial ribosomal protein bS16 family.

The protein localises to the plastid. It localises to the chloroplast. This is Small ribosomal subunit protein bS16c from Coffea arabica (Arabian coffee).